The following is a 201-amino-acid chain: Transgelin (201 aa).

An N-acetylalanine modification is found at alanine 2. Residues 24-137 form the Calponin-homology (CH) domain; sequence EELEERLVEW…RTVMALGSLA (114 aa). The interval 154–161 is could be involved in actin-binding; the sequence is KKAQEHKR. Position 166 is a phosphoserine (serine 166). At lysine 172 the chain carries N6-acetyllysine. Residues 175–200 form a Calponin-like repeat; that stretch reads IGLQMGSNRGASQAGMTGYGRPRQII. Serine 181 is modified (phosphoserine). Arginine 183 bears the Omega-N-methylarginine mark.

This sequence belongs to the calponin family. As to expression, smooth muscle and mesenchymal cells but not in skeletal muscle or lymphocytes.

It localises to the cytoplasm. In terms of biological role, actin cross-linking/gelling protein. The polypeptide is Transgelin (Tagln) (Rattus norvegicus (Rat)).